We begin with the raw amino-acid sequence, 402 residues long: Serine/threonine transporter SstT (402 aa).

Helical transmembrane passes span 19 to 39 (IGVV…AIGL), 43 to 63 (LFVG…VISA), 86 to 106 (TFAA…TLIL), 138 to 158 (AITE…GLAM), 179 to 199 (VVKW…FTSI), 212 to 232 (LLIL…NPII), 287 to 307 (IPLG…ILTL), 327 to 347 (VVAA…LLLI), and 354 to 374 (FGIS…VGVI).

It belongs to the dicarboxylate/amino acid:cation symporter (DAACS) (TC 2.A.23) family.

Its subcellular location is the cell membrane. It catalyses the reaction L-serine(in) + Na(+)(in) = L-serine(out) + Na(+)(out). The enzyme catalyses L-threonine(in) + Na(+)(in) = L-threonine(out) + Na(+)(out). Its function is as follows. Involved in the import of serine and threonine into the cell, with the concomitant import of sodium (symport system). The polypeptide is Serine/threonine transporter SstT (Streptococcus agalactiae serotype III (strain NEM316)).